Consider the following 142-residue polypeptide: Small ribosomal subunit protein uS9 (142 aa).

It belongs to the universal ribosomal protein uS9 family.

This Debaryomyces hansenii (strain ATCC 36239 / CBS 767 / BCRC 21394 / JCM 1990 / NBRC 0083 / IGC 2968) (Yeast) protein is Small ribosomal subunit protein uS9 (RPS16).